A 193-amino-acid chain; its full sequence is 7-methyl-GTP pyrophosphatase (193 aa).

Asp70 (proton acceptor) is an active-site residue.

Belongs to the Maf family. YceF subfamily. Requires a divalent metal cation as cofactor.

Its subcellular location is the cytoplasm. The enzyme catalyses N(7)-methyl-GTP + H2O = N(7)-methyl-GMP + diphosphate + H(+). Functionally, nucleoside triphosphate pyrophosphatase that hydrolyzes 7-methyl-GTP (m(7)GTP). May have a dual role in cell division arrest and in preventing the incorporation of modified nucleotides into cellular nucleic acids. This chain is 7-methyl-GTP pyrophosphatase, found in Aliivibrio fischeri (strain ATCC 700601 / ES114) (Vibrio fischeri).